The chain runs to 444 residues: EMI domain-containing protein 1 (444 aa).

Residues 1-22 (MGGPRAWTLLCLGLLLPGGGAA) form the signal peptide. An EMI domain is found at 33–106 (RRNWCSYVVT…PGHSGVTCEE (74 aa)). 3 cysteine pairs are disulfide-bonded: C37–C96, C62–C68, and C95–C104. T42 is a glycosylation site (O-linked (Fuc) threonine). An N-linked (GlcNAc...) asparagine glycan is attached at N51. N136 carries an N-linked (GlcNAc...) asparagine glycan. Disordered stretches follow at residues 161 to 374 (EQTV…KSHW) and 404 to 444 (PDLG…SERS). In terms of domain architecture, Collagen-like spans 221–371 (GPPGPQGPPG…PGPKGDPGEK (151 aa)). Over residues 222-231 (PPGPQGPPGR) the composition is skewed to pro residues. Positions 232 to 243 (PGQTGAAGTPGK) are enriched in low complexity. Pro residues-rich tracts occupy residues 244 to 264 (MGPP…PVGP) and 292 to 311 (PTGP…PGLP).

As to quaternary structure, homo- or heteromers. In terms of processing, O-fucosylated at Thr-42 within the EMI domain by FUT10/POFUT3 and FUT11/POFUT4.

Its subcellular location is the secreted. The protein resides in the extracellular space. It localises to the extracellular matrix. This is EMI domain-containing protein 1 (Emid1) from Mus musculus (Mouse).